The sequence spans 131 residues: Fluoride-specific ion channel FluC 1 (131 aa).

4 helical membrane-spanning segments follow: residues 4 to 24, 40 to 60, 73 to 93, and 108 to 128; these read LALPAWQASLVAIGAVPGAWL, HWGTFAVNMVAAFALGLVLAL, LILLIGVGFFGSLSTFSTFAV, and LVLAVGSILGGLLAVAAGVGL. The Na(+) site is built by G83 and S86.

The protein belongs to the fluoride channel Fluc/FEX (TC 1.A.43) family.

It localises to the cell inner membrane. It carries out the reaction fluoride(in) = fluoride(out). Na(+) is not transported, but it plays an essential structural role and its presence is essential for fluoride channel function. In terms of biological role, fluoride-specific ion channel. Important for reducing fluoride concentration in the cell, thus reducing its toxicity. In Prochlorococcus marinus (strain MIT 9313), this protein is Fluoride-specific ion channel FluC 1.